Here is a 349-residue protein sequence, read N- to C-terminus: Isopentenyl-diphosphate delta-isomerase (349 aa).

6–7 lines the substrate pocket; sequence RK. FMN contacts are provided by residues 62-64, serine 93, and asparagine 122; that span reads AMT. Substrate is bound at residue glutamine 152. Glutamate 153 is a Mg(2+) binding site. Residues lysine 184, threonine 214, 258-259, and 280-281 each bind FMN; these read GG and AG.

The protein belongs to the IPP isomerase type 2 family. As to quaternary structure, homooctamer. Dimer of tetramers. The cofactor is FMN. NADPH is required as a cofactor. Requires Mg(2+) as cofactor.

Its subcellular location is the cytoplasm. It catalyses the reaction isopentenyl diphosphate = dimethylallyl diphosphate. In terms of biological role, involved in the biosynthesis of isoprenoids. Catalyzes the 1,3-allylic rearrangement of the homoallylic substrate isopentenyl (IPP) to its allylic isomer, dimethylallyl diphosphate (DMAPP). The sequence is that of Isopentenyl-diphosphate delta-isomerase from Bacillus cytotoxicus (strain DSM 22905 / CIP 110041 / 391-98 / NVH 391-98).